A 344-amino-acid polypeptide reads, in one-letter code: Methionine import ATP-binding protein MetN (344 aa).

One can recognise an ABC transporter domain in the interval 2 to 241 (IELQGLSQRF…PQHEVTRAMI (240 aa)). 38–45 (GRSGAGKS) lines the ATP pocket.

It belongs to the ABC transporter superfamily. Methionine importer (TC 3.A.1.24) family. As to quaternary structure, the complex is composed of two ATP-binding proteins (MetN), two transmembrane proteins (MetI) and a solute-binding protein (MetQ).

It localises to the cell inner membrane. The catalysed reaction is L-methionine(out) + ATP + H2O = L-methionine(in) + ADP + phosphate + H(+). The enzyme catalyses D-methionine(out) + ATP + H2O = D-methionine(in) + ADP + phosphate + H(+). Part of the ABC transporter complex MetNIQ involved in methionine import. Responsible for energy coupling to the transport system. The chain is Methionine import ATP-binding protein MetN from Cupriavidus pinatubonensis (strain JMP 134 / LMG 1197) (Cupriavidus necator (strain JMP 134)).